The primary structure comprises 509 residues: Maturase K (509 aa).

This sequence belongs to the intron maturase 2 family. MatK subfamily.

Its subcellular location is the plastid. It localises to the chloroplast. In terms of biological role, usually encoded in the trnK tRNA gene intron. Probably assists in splicing its own and other chloroplast group II introns. The chain is Maturase K from Hottonia palustris (Water-violet).